A 297-amino-acid polypeptide reads, in one-letter code: 33 kDa chaperonin (297 aa).

Intrachain disulfides connect Cys-232–Cys-234 and Cys-266–Cys-269.

Belongs to the HSP33 family. In terms of processing, under oxidizing conditions two disulfide bonds are formed involving the reactive cysteines. Under reducing conditions zinc is bound to the reactive cysteines and the protein is inactive.

It localises to the cytoplasm. Its function is as follows. Redox regulated molecular chaperone. Protects both thermally unfolding and oxidatively damaged proteins from irreversible aggregation. Plays an important role in the bacterial defense system toward oxidative stress. This chain is 33 kDa chaperonin, found in Pseudomonas aeruginosa (strain UCBPP-PA14).